Consider the following 170-residue polypeptide: CASP-like protein 2D1 (170 aa).

Residues 1–4 (MLKL) lie on the Cytoplasmic side of the membrane. The chain crosses the membrane as a helical span at residues 5-25 (LDFSLRLSVIPLSVATIWLTV). Topologically, residues 26-47 (TNKQDNSIYGYLKYSDLTGLKY) are extracellular. A helical transmembrane segment spans residues 48–68 (MVFISGICASYAFIAAVSTWI). The Cytoplasmic segment spans residues 69–83 (RCIVTKTWLFFVSDQ). The chain crosses the membrane as a helical span at residues 84 to 104 (IVAYLMVTSGTAVLEILYLAY). At 105 to 127 (NGDREVSWSEACTSYGKFCYRMK) the chain is on the extracellular side. The chain crosses the membrane as a helical span at residues 128 to 148 (LAVILHALALSCFIILAVISA). Topologically, residues 149 to 170 (YRAFSIFEPPLVPSKVVEEDRA) are cytoplasmic.

This sequence belongs to the Casparian strip membrane proteins (CASP) family. Homodimer and heterodimers.

It localises to the cell membrane. This Populus trichocarpa (Western balsam poplar) protein is CASP-like protein 2D1.